The following is a 31-amino-acid chain: Cyclotide mra3 (31 aa).

Intrachain disulfides connect Cys5-Cys21, Cys9-Cys23, and Cys14-Cys28.

This is a cyclic peptide. In terms of processing, contains 3 disulfide bonds.

In terms of biological role, probably participates in a plant defense mechanism. This is Cyclotide mra3 from Melicytus ramiflorus (Whitey wood).